We begin with the raw amino-acid sequence, 2206 residues long: Genome polyprotein (2206 aa).

Glycine 2 carries the N-myristoyl glycine; by host lipid modification. Residues 2 to 1517 are Cytoplasmic-facing; sequence GAQVSSQKVG…NINRAMTILQ (1516 aa). Amphipathic alpha-helix regions lie at residues 579–599 and 579–603; these read GVDD…LPKP and GVDD…QSNL. Catalysis depends on for protease 2A activity residues histidine 898 and aspartate 916. Zn(2+) contacts are provided by cysteine 933 and cysteine 935. Catalysis depends on cysteine 987, which acts as the For protease 2A activity. Zn(2+) contacts are provided by cysteine 993 and histidine 995. Residues 1125–1197 are membrane-binding; it reads GDSWLKKFTE…HQSCPSQEHQ (73 aa). The segment at 1125–1263 is oligomerization; it reads GDSWLKKFTE…SPGTGKSVAT (139 aa). The tract at residues 1146–1150 is RNA-binding; the sequence is SNKIS. One can recognise an SF3 helicase domain in the interval 1229-1385; the sequence is EHTINNYIQF…SEYSRDGKLN (157 aa). 1253 to 1260 contacts ATP; it reads GSPGTGKS. Residues cysteine 1393, cysteine 1396, cysteine 1405, and cysteine 1410 each coordinate Zn(2+). A C4-type zinc finger spans residues 1393 to 1410; it reads CKNCHQPANFKRCCPLVC. The RNA-binding stretch occupies residues 1437–1444; sequence EKNRRSNI. The segment at 1448–1453 is oligomerization; the sequence is MEALFQ. Residues 1518-1533 lie within the membrane without spanning it; sequence AVTTFAAVAGVVYVMY. Topologically, residues 1534–2206 are cytoplasmic; that stretch reads KLFAGHQGAY…TLYRRWLDSF (673 aa). The residue at position 1543 (tyrosine 1543) is an O-(5'-phospho-RNA)-tyrosine. A Peptidase C3 domain is found at 1563–1741; it reads GPGFDYAVAM…FAAALKRSYF (179 aa). Active-site for protease 3C activity residues include histidine 1602, glutamate 1633, and cysteine 1709. One can recognise a RdRp catalytic domain in the interval 1972–2087; the sequence is EKLFAFDYTG…SYPHEVDASL (116 aa). Aspartate 1978 and aspartate 2073 together coordinate Mg(2+).

The protein belongs to the picornaviruses polyprotein family. Interacts with capsid protein VP1 and capsid protein VP3 to form heterotrimeric protomers. As to quaternary structure, interacts with capsid protein VP0, and capsid protein VP3 to form heterotrimeric protomers. Interacts with human PVR. Five protomers subsequently associate to form pentamers which serve as building blocks for the capsid. Interacts with capsid protein VP2, capsid protein VP3 and capsid protein VP4 following cleavage of capsid protein VP0. In terms of assembly, interacts with capsid protein VP1 and capsid protein VP3 in the mature capsid. Interacts with capsid protein VP0 and capsid protein VP1 to form heterotrimeric protomers. Five protomers subsequently associate to form pentamers which serve as building blocks for the capsid. Interacts with capsid protein VP4 in the mature capsid. Interacts with protein 2C; this interaction may be important for virion morphogenesis. As to quaternary structure, interacts with capsid protein VP1 and capsid protein VP3. In terms of assembly, homodimer. Homohexamer; forms a hexameric ring structure with 6-fold symmetry characteristic of AAA+ ATPases. Interacts (via N-terminus) with host RTN3 (via reticulon domain); this interaction is important for viral replication. Interacts with capsid protein VP3; this interaction may be important for virion morphogenesis. As to quaternary structure, interacts with protein 3CD. In terms of assembly, homodimer. Interacts with host GBF1. Interacts (via GOLD domain) with host ACBD3 (via GOLD domain); this interaction allows the formation of a viral protein 3A/ACBD3 heterotetramer with a 2:2 stoichiometry, which will stimulate the recruitment of host PI4KB in order to synthesize PI4P at the viral RNA replication sites. Interacts with RNA-directed RNA polymerase. As to quaternary structure, interacts with protein 3AB and with RNA-directed RNA polymerase. In terms of assembly, interacts with Viral protein genome-linked and with protein 3CD. Mg(2+) serves as cofactor. In terms of processing, specific enzymatic cleavages in vivo by the viral proteases yield processing intermediates and the mature proteins. Myristoylation is required for the formation of pentamers during virus assembly. Further assembly of 12 pentamers and a molecule of genomic RNA generates the provirion. Post-translationally, during virion maturation, immature virions are rendered infectious following cleavage of VP0 into VP4 and VP2. This maturation seems to be an autocatalytic event triggered by the presence of RNA in the capsid and it is followed by a conformational change infectious virion. In terms of processing, myristoylation is required during RNA encapsidation and formation of the mature virus particle. VPg is uridylylated by the polymerase into VPg-pUpU. This acts as a nucleotide-peptide primer for the genomic RNA replication.

It is found in the virion. The protein localises to the host cytoplasm. The protein resides in the host cytoplasmic vesicle membrane. It localises to the host nucleus. It catalyses the reaction a ribonucleoside 5'-triphosphate + H2O = a ribonucleoside 5'-diphosphate + phosphate + H(+). The enzyme catalyses Selective cleavage of Tyr-|-Gly bond in the picornavirus polyprotein.. The catalysed reaction is RNA(n) + a ribonucleoside 5'-triphosphate = RNA(n+1) + diphosphate. It carries out the reaction Selective cleavage of Gln-|-Gly bond in the poliovirus polyprotein. In other picornavirus reactions Glu may be substituted for Gln, and Ser or Thr for Gly.. Its activity is regulated as follows. Replication or transcription is subject to high level of random mutations by the nucleotide analog ribavirin. Forms an icosahedral capsid of pseudo T=3 symmetry with capsid proteins VP2 and VP3. The capsid is 300 Angstroms in diameter, composed of 60 copies of each capsid protein and enclosing the viral positive strand RNA genome. Capsid protein VP1 mainly forms the vertices of the capsid. Capsid protein VP1 interacts with host cell receptor PVR to provide virion attachment to target host cells. This attachment induces virion internalization predominantly through clathrin- and caveolin-independent endocytosis in Hela cells and through caveolin-mediated endocytosis in brain microvascular endothelial cells. Tyrosine kinases are probably involved in the entry process. Virus binding to PVR induces increased junctional permeability and rearrangement of junctional proteins. Modulation of endothelial tight junctions, as well as cytolytic infection of endothelial cells themselves, may result in loss of endothelial integrity which may help the virus to reach the CNS. After binding to its receptor, the capsid undergoes conformational changes. Capsid protein VP1 N-terminus (that contains an amphipathic alpha-helix) and capsid protein VP4 are externalized. Together, they shape a pore in the host membrane through which viral genome is translocated to host cell cytoplasm. Functionally, forms an icosahedral capsid of pseudo T=3 symmetry with capsid proteins VP2 and VP3. The capsid is 300 Angstroms in diameter, composed of 60 copies of each capsid protein and enclosing the viral positive strand RNA genome. Its function is as follows. Lies on the inner surface of the capsid shell. After binding to the host receptor, the capsid undergoes conformational changes. Capsid protein VP4 is released, Capsid protein VP1 N-terminus is externalized, and together, they shape a pore in the host membrane through which the viral genome is translocated into the host cell cytoplasm. In terms of biological role, component of immature procapsids, which is cleaved into capsid proteins VP4 and VP2 after maturation. Allows the capsid to remain inactive before the maturation step. Cysteine protease that cleaves viral polyprotein and specific host proteins. It is responsible for the autocatalytic cleavage between the P1 and P2 regions, which is the first cleavage occurring in the polyprotein. Also cleaves the host translation initiation factor EIF4G1, in order to shut down the capped cellular mRNA translation. Inhibits the host nucleus-cytoplasm protein and RNA trafficking by cleaving host members of the nuclear pores including NUP98, NUP62 and NUP153. Counteracts stress granule formation probably by antagonizing its assembly or promoting its dissassembly. Cleaves and inhibits host IFIH1/MDA5, thereby inhibiting the type-I IFN production and the establishment of the antiviral state. Cleaves and inhibits host MAVS, thereby inhibiting the type-I IFN production and the establishment of the antiviral state. Functionally, plays an essential role in the virus replication cycle by acting as a viroporin. Creates a pore in the host endoplasmic reticulum and as a consequence releases Ca2+ in the cytoplasm of infected cell. In turn, high levels of cytoplasmic calcium may trigger membrane trafficking and transport of viral ER-associated proteins to viroplasms, sites of viral genome replication. Its function is as follows. Induces and associates with structural rearrangements of intracellular membranes. Displays RNA-binding, nucleotide binding and NTPase activities. May play a role in virion morphogenesis and viral RNA encapsidation by interacting with the capsid protein VP3. In terms of biological role, localizes the viral replication complex to the surface of membranous vesicles. Together with protein 3CD binds the Cis-Active RNA Element (CRE) which is involved in RNA synthesis initiation. Acts as a cofactor to stimulate the activity of 3D polymerase, maybe through a nucleid acid chaperone activity. Localizes the viral replication complex to the surface of membranous vesicles. It inhibits host cell endoplasmic reticulum-to-Golgi apparatus transport and causes the disassembly of the Golgi complex, possibly through GBF1 interaction. This would result in depletion of MHC, trail receptors and IFN receptors at the host cell surface. Plays an essential role in viral RNA replication by recruiting ACBD3 and PI4KB at the viral replication sites, thereby allowing the formation of the rearranged membranous structures where viral replication takes place. Functionally, acts as a primer for viral RNA replication and remains covalently bound to viral genomic RNA. VPg is uridylylated prior to priming replication into VPg-pUpU. The oriI viral genomic sequence may act as a template for this. The VPg-pUpU is then used as primer on the genomic RNA poly(A) by the RNA-dependent RNA polymerase to replicate the viral genome. During genome replication, the VPg-RNA linkage is removed by the host TDP2, thereby accelerating replication. During the late stage of the replication cycle, host TDP2 is excluded from sites of viral RNA synthesis and encapsidation, allowing for the generation of progeny virions. Its function is as follows. Involved in the viral replication complex and viral polypeptide maturation. It exhibits protease activity with a specificity and catalytic efficiency that is different from protease 3C. Protein 3CD lacks polymerase activity. Protein 3CD binds to the 5'UTR of the viral genome. In terms of biological role, major viral protease that mediates proteolytic processing of the polyprotein. Cleaves host EIF5B, contributing to host translation shutoff. Also cleaves host PABPC1, contributing to host translation shutoff. Cleaves host RIGI and thus contributes to the inhibition of type I interferon production. Cleaves host NLRP1, triggers host N-glycine-mediated degradation of the autoinhibitory NLRP1 N-terminal fragment. Inhibits the integrated stress response (ISR) in the infected cell by cleaving host G3BP1. Stress granule formation is thus inhibited, which allows protein synthesis and viral replication. Replicates the viral genomic RNA on the surface of intracellular membranes. May form linear arrays of subunits that propagate along a strong head-to-tail interaction called interface-I. Covalently attaches UMP to a tyrosine of VPg, which is used to prime RNA synthesis. The positive stranded RNA genome is first replicated at virus induced membranous vesicles, creating a dsRNA genomic replication form. This dsRNA is then used as template to synthesize positive stranded RNA genomes. ss(+)RNA genomes are either translated, replicated or encapsidated. The polypeptide is Genome polyprotein (Poliovirus type 3 (strain 23127)).